Here is a 385-residue protein sequence, read N- to C-terminus: Cytochrome b (385 aa).

4 consecutive transmembrane segments (helical) span residues 34–54, 78–99, 114–134, and 179–199; these read FGSL…LLTM, WFIR…FIHI, WYSG…GYVL, and FLVL…IHLV. 2 residues coordinate heme b: His84 and His98. Positions 183 and 197 each coordinate heme b. His202 is an a ubiquinone binding site. The next 4 membrane-spanning stretches (helical) occupy residues 227 to 247, 289 to 309, 321 to 341, and 348 to 368; these read FKDI…SLLL, LAGI…PILI, LMQV…WLGA, and FILM…VMFP.

This sequence belongs to the cytochrome b family. As to quaternary structure, the cytochrome bc1 complex contains 3 respiratory subunits (MT-CYB, CYC1 and UQCRFS1), 2 core proteins (UQCRC1 and UQCRC2) and probably 6 low-molecular weight proteins. The cofactor is heme b.

It is found in the mitochondrion inner membrane. Its function is as follows. Component of the ubiquinol-cytochrome c reductase complex (complex III or cytochrome b-c1 complex) that is part of the mitochondrial respiratory chain. The b-c1 complex mediates electron transfer from ubiquinol to cytochrome c. Contributes to the generation of a proton gradient across the mitochondrial membrane that is then used for ATP synthesis. This chain is Cytochrome b (MT-CYB), found in Eptatretus burgeri (Inshore hagfish).